Here is a 24-residue protein sequence, read N- to C-terminus: Flavin reductase (NADPH) (24 aa).

Glycine 9, threonine 11, glycine 12, and threonine 14 together coordinate NADP(+).

The protein belongs to the BLVRB family. As to quaternary structure, monomer. Detected in erythrocytes (at protein level).

It localises to the cytoplasm. It carries out the reaction reduced riboflavin + NADP(+) = riboflavin + NADPH + 2 H(+). The enzyme catalyses bilirubin IXbeta + NADP(+) = biliverdin IXbeta + NADPH + H(+). It catalyses the reaction FMNH2 + NAD(+) = FMN + NADH + 2 H(+). The catalysed reaction is FMNH2 + NADP(+) = FMN + NADPH + 2 H(+). It carries out the reaction S-nitroso-CoA + L-cysteinyl-[protein] = S-nitroso-L-cysteinyl-[protein] + CoA. The enzyme catalyses L-cysteinyl-[SCAN] + S-nitroso-CoA = S-nitroso-L-cysteinyl-[SCAN] + CoA. It catalyses the reaction S-nitroso-L-cysteinyl-[SCAN] + L-cysteinyl-[protein] = L-cysteinyl-[SCAN] + S-nitroso-L-cysteinyl-[protein]. Functionally, enzyme that can both act as a NAD(P)H-dependent reductase and a S-nitroso-CoA-dependent nitrosyltransferase. Promotes fetal heme degradation during development. Also expressed in adult tissues, where it acts as a regulator of hematopoiesis, intermediary metabolism (glutaminolysis, glycolysis, TCA cycle and pentose phosphate pathway) and insulin signaling. Has a broad specificity oxidoreductase activity by catalyzing the NAD(P)H-dependent reduction of a variety of flavins, such as riboflavin, FAD or FMN, biliverdins, methemoglobin and PQQ (pyrroloquinoline quinone). Contributes to fetal heme catabolism by catalyzing reduction of biliverdin IXbeta into bilirubin IXbeta in the liver. Biliverdin IXbeta, which constitutes the major heme catabolite in the fetus is not present in adult. Does not reduce bilirubin IXalpha. Can also reduce the complexed Fe(3+) iron to Fe(2+) in the presence of FMN and NADPH. Acts as a protein nitrosyltransferase by catalyzing nitrosylation of cysteine residues of target proteins, such as HMOX2, INSR and IRS1. S-nitroso-CoA-dependent nitrosyltransferase activity is mediated via a 'ping-pong' mechanism: BLVRB first associates with both S-nitroso-CoA and protein substrate, nitric oxide group is then transferred from S-nitroso-CoA to Cys residues of BLVRB and from S-nitroso-BLVRB to the protein substrate. Inhibits insulin signaling by mediating nitrosylation of INSR and IRS1, leading to their inhibition. The protein is Flavin reductase (NADPH) (BLVRB) of Aquarana catesbeiana (American bullfrog).